The chain runs to 227 residues: Lipoprotein-releasing system ATP-binding protein LolD (227 aa).

The 221-residue stretch at 7 to 227 folds into the ABC transporter domain; sequence LSCRDLGKSY…HLQEGHLVAI (221 aa). Residue 43–50 coordinates ATP; sequence GTSGSGKS.

The protein belongs to the ABC transporter superfamily. Lipoprotein translocase (TC 3.A.1.125) family. In terms of assembly, the complex is composed of two ATP-binding proteins (LolD) and two transmembrane proteins (LolC and LolE).

It localises to the cell inner membrane. Functionally, part of the ABC transporter complex LolCDE involved in the translocation of mature outer membrane-directed lipoproteins, from the inner membrane to the periplasmic chaperone, LolA. Responsible for the formation of the LolA-lipoprotein complex in an ATP-dependent manner. The sequence is that of Lipoprotein-releasing system ATP-binding protein LolD from Pseudomonas fluorescens (strain ATCC BAA-477 / NRRL B-23932 / Pf-5).